Here is a 453-residue protein sequence, read N- to C-terminus: UDP-N-acetylmuramoylalanine--D-glutamate ligase (453 aa).

115–121 contributes to the ATP binding site; sequence GTNGKTT.

The protein belongs to the MurCDEF family.

It localises to the cytoplasm. It catalyses the reaction UDP-N-acetyl-alpha-D-muramoyl-L-alanine + D-glutamate + ATP = UDP-N-acetyl-alpha-D-muramoyl-L-alanyl-D-glutamate + ADP + phosphate + H(+). It functions in the pathway cell wall biogenesis; peptidoglycan biosynthesis. Cell wall formation. Catalyzes the addition of glutamate to the nucleotide precursor UDP-N-acetylmuramoyl-L-alanine (UMA). The polypeptide is UDP-N-acetylmuramoylalanine--D-glutamate ligase (Geotalea daltonii (strain DSM 22248 / JCM 15807 / FRC-32) (Geobacter daltonii)).